The chain runs to 807 residues: Enhancer of polycomb homolog 2 (807 aa).

Glycyl lysine isopeptide (Lys-Gly) (interchain with G-Cter in SUMO2) cross-links involve residues Lys135, Lys195, Lys324, and Lys362. Residues 376 to 396 are disordered; that stretch reads DEFPQVLSPVSEPEEENDPDG. Phosphoserine is present on Ser538. Low complexity predominate over residues 600 to 613; the sequence is QLQQKQQSQHSSQQ. Disordered stretches follow at residues 600 to 628 and 645 to 673; these read QLQQ…DCMS and SAPV…QPSG. Composition is skewed to polar residues over residues 614–628 and 657–673; these read THPK…DCMS and EQNT…QPSG. Position 754 is a phosphoserine (Ser754).

The protein belongs to the enhancer of polycomb family.

It localises to the nucleus. Its function is as follows. May play a role in transcription or DNA repair. This Homo sapiens (Human) protein is Enhancer of polycomb homolog 2 (EPC2).